The sequence spans 232 residues: 2-C-methyl-D-erythritol 4-phosphate cytidylyltransferase (232 aa).

This sequence belongs to the IspD/TarI cytidylyltransferase family. IspD subfamily.

The enzyme catalyses 2-C-methyl-D-erythritol 4-phosphate + CTP + H(+) = 4-CDP-2-C-methyl-D-erythritol + diphosphate. The protein operates within isoprenoid biosynthesis; isopentenyl diphosphate biosynthesis via DXP pathway; isopentenyl diphosphate from 1-deoxy-D-xylulose 5-phosphate: step 2/6. Catalyzes the formation of 4-diphosphocytidyl-2-C-methyl-D-erythritol from CTP and 2-C-methyl-D-erythritol 4-phosphate (MEP). The sequence is that of 2-C-methyl-D-erythritol 4-phosphate cytidylyltransferase from Rhodococcus erythropolis (strain PR4 / NBRC 100887).